The chain runs to 428 residues: Glutamate-1-semialdehyde 2,1-aminomutase 1 (428 aa).

Lys-267 carries the N6-(pyridoxal phosphate)lysine modification.

The protein belongs to the class-III pyridoxal-phosphate-dependent aminotransferase family. HemL subfamily. As to quaternary structure, homodimer. The cofactor is pyridoxal 5'-phosphate.

The protein resides in the cytoplasm. It catalyses the reaction (S)-4-amino-5-oxopentanoate = 5-aminolevulinate. The protein operates within porphyrin-containing compound metabolism; protoporphyrin-IX biosynthesis; 5-aminolevulinate from L-glutamyl-tRNA(Glu): step 2/2. This chain is Glutamate-1-semialdehyde 2,1-aminomutase 1, found in Staphylococcus aureus (strain bovine RF122 / ET3-1).